A 411-amino-acid polypeptide reads, in one-letter code: 2,3-bisphosphoglycerate-independent phosphoglycerate mutase (411 aa).

It belongs to the BPG-independent phosphoglycerate mutase family. A-PGAM subfamily.

The catalysed reaction is (2R)-2-phosphoglycerate = (2R)-3-phosphoglycerate. It participates in carbohydrate degradation; glycolysis; pyruvate from D-glyceraldehyde 3-phosphate: step 3/5. In terms of biological role, catalyzes the interconversion of 2-phosphoglycerate and 3-phosphoglycerate. The chain is 2,3-bisphosphoglycerate-independent phosphoglycerate mutase from Thermococcus gammatolerans (strain DSM 15229 / JCM 11827 / EJ3).